The chain runs to 562 residues: Autophagy-related protein 18 (562 aa).

The segment at 1–22 is disordered; the sequence is MLKNQSNSVHVDGSHNNSSNYN. 2 WD repeats span residues 246-286 and 291-330; these read AHKS…KLYQ and TYPTKIFTLSFSFDNKYVLATSSSGTVHIFRLGEEESLEN. The L/FRRG motif signature appears at 287-291; sequence FRRGT. Positions 327 to 425 are disordered; that stretch reads SLENKHKRKR…NKDNKSEPLI (99 aa). Residues 331–342 show a composition bias toward basic residues; sequence KHKRKRNSKKLK. Acidic residues predominate over residues 349-386; sequence TITEENENEIQKDDAEDDDIIQDDGDDSDADDDDDESL. A compositionally biased stretch (low complexity) spans 399–413; sequence DSNNSFTSFNSAFSN. The segment covering 414-423 has biased composition (basic and acidic residues); the sequence is DDNKDNKSEP.

It belongs to the WD repeat PROPPIN family. In terms of assembly, component of the PI(3,5)P2 regulatory complex.

The protein localises to the preautophagosomal structure membrane. The protein resides in the vacuole membrane. Its subcellular location is the endosome membrane. Its function is as follows. The PI(3,5)P2 regulatory complex regulates both the synthesis and turnover of phosphatidylinositol 3,5-bisphosphate (PtdIns(3,5)P2). Necessary for proper vacuole morphology. Plays an important role in osmotically-induced vacuole fragmentation. Required for cytoplasm to vacuole transport (Cvt) vesicle formation, pexophagy and starvation-induced autophagy. Involved in correct ATG9 trafficking to the pre-autophagosomal structure. Might also be involved in premeiotic DNA replication. This is Autophagy-related protein 18 (ATG18) from Debaryomyces hansenii (strain ATCC 36239 / CBS 767 / BCRC 21394 / JCM 1990 / NBRC 0083 / IGC 2968) (Yeast).